A 565-amino-acid chain; its full sequence is MFPIIILISFSFTFLFASVTSGAGGVTNLSTCLINHNVHNFSIYPTKNDQSSSNYFNLLDFSLQNLRFAASYMPKPTVIILPNSKEELVSTILCCRQTSYEIRVRCGGHSYEGTSYVSFDGSPFVIVDLMKLDDVSVDLDSETAWAQGGATIGQIYYAISRVSDVHAFSAGSGPTVGSGGHISGGGFGLMSRKFGLAADSVVDALLIDAEGRLLDRKAMGEDVFWAIRGGGGGNWGIIYAWKIRLLKVPKIVTTCMIYRPGSKQYVAQLLQKWQIVTPNLADDFTLGVLMRPIDLRADMNYGNTTPIETFPQFNALYLGPKTEAVSILNEAFPELDAKNDDAKEMTWIESALFFSELDNVFGNSSDDISRLKERYMDAKTFFKGKSDFVKTPFSMDAMMTALVELEKNPKSFLVFDPYGGVMDKISDQAIAFPHRKGNLFAVQYYAFWNEEDDAKSNEYIEWTRGFYNKMAPFVSSSPRGAYINYLDMDLGVNMDDDYLLRNASSRSSSSSVDAVERARAWGEMYFLHNYDRLVKAKTQIDPLNVFRHEQSIPPMLGSTQEHSSE.

The signal sequence occupies residues 1–17; sequence MFPIIILISFSFTFLFA. 2 N-linked (GlcNAc...) asparagine glycosylation sites follow: asparagine 28 and asparagine 40. An intrachain disulfide couples cysteine 32 to cysteine 94. One can recognise an FAD-binding PCMH-type domain in the interval 72–248; sequence YMPKPTVIIL…YAWKIRLLKV (177 aa). A Pros-8alpha-FAD histidine modification is found at histidine 109. Residues asparagine 363 and asparagine 502 are each glycosylated (N-linked (GlcNAc...) asparagine).

This sequence belongs to the oxygen-dependent FAD-linked oxidoreductase family. FAD is required as a cofactor.

It is found in the vacuole. It functions in the pathway alkaloid biosynthesis; nicotine biosynthesis. In terms of biological role, involved in the biosynthesis of pyridine alkaloid natural products, leading mainly to the production of anabasine, anatabine, nicotine and nornicotine, effective deterrents against herbivores with antiparasitic and pesticide properties (neurotoxins); nornicotine serves as the precursor in the synthesis of the carcinogen compound N'-nitrosonornicotine (NNN). Catalyzes a late oxidation step subsequent to the pyridine ring condensation reaction in the biosynthesis of alkaloids. The polypeptide is Berberine bridge enzyme-like C-2 (Nicotiana tabacum (Common tobacco)).